Here is a 163-residue protein sequence, read N- to C-terminus: Transcription elongation factor GreA (163 aa).

Residues 11–38 are a coiled coil; it reads FKQLEKELDRLKKERPGVIQAIKEAREE.

Belongs to the GreA/GreB family.

Functionally, necessary for efficient RNA polymerase transcription elongation past template-encoded arresting sites. The arresting sites in DNA have the property of trapping a certain fraction of elongating RNA polymerases that pass through, resulting in locked ternary complexes. Cleavage of the nascent transcript by cleavage factors such as GreA or GreB allows the resumption of elongation from the new 3'terminus. GreA releases sequences of 2 to 3 nucleotides. This is Transcription elongation factor GreA from Nitratidesulfovibrio vulgaris (strain ATCC 29579 / DSM 644 / CCUG 34227 / NCIMB 8303 / VKM B-1760 / Hildenborough) (Desulfovibrio vulgaris).